We begin with the raw amino-acid sequence, 387 residues long: Mannitol-1-phosphate 5-dehydrogenase (387 aa).

NAD(+) is bound at residue 3 to 14 (AVHFGAGNIGRG).

The protein belongs to the mannitol dehydrogenase family.

The catalysed reaction is D-mannitol 1-phosphate + NAD(+) = beta-D-fructose 6-phosphate + NADH + H(+). The chain is Mannitol-1-phosphate 5-dehydrogenase from Pseudarthrobacter chlorophenolicus (strain ATCC 700700 / DSM 12829 / CIP 107037 / JCM 12360 / KCTC 9906 / NCIMB 13794 / A6) (Arthrobacter chlorophenolicus).